A 238-amino-acid polypeptide reads, in one-letter code: Large ribosomal subunit protein bL17m (238 aa).

This sequence belongs to the bacterial ribosomal protein bL17 family. In terms of assembly, component of the mitochondrial large ribosomal subunit (mt-LSU). Mature yeast 74S mitochondrial ribosomes consist of a small (37S) and a large (54S) subunit. The 37S small subunit contains a 15S ribosomal RNA (15S mt-rRNA) and 34 different proteins. The 54S large subunit contains a 21S rRNA (21S mt-rRNA) and 46 different proteins.

The protein resides in the mitochondrion. Its function is as follows. Component of the mitochondrial ribosome (mitoribosome), a dedicated translation machinery responsible for the synthesis of mitochondrial genome-encoded proteins, including at least some of the essential transmembrane subunits of the mitochondrial respiratory chain. The mitoribosomes are attached to the mitochondrial inner membrane and translation products are cotranslationally integrated into the membrane. The sequence is that of Large ribosomal subunit protein bL17m (MRPL8) from Saccharomyces cerevisiae (strain ATCC 204508 / S288c) (Baker's yeast).